The following is a 543-amino-acid chain: Carboxypeptidase Y homolog A (543 aa).

The N-terminal stretch at 1–17 (MRVLPATLLVGAATAAV) is a signal peptide. Positions 18 to 124 (PPFQQILGLP…KLEAYDLRVK (107 aa)) are excised as a propeptide. Intrachain disulfides connect cysteine 179-cysteine 419, cysteine 313-cysteine 327, cysteine 337-cysteine 360, cysteine 344-cysteine 353, and cysteine 382-cysteine 389. The N-linked (GlcNAc...) asparagine glycan is linked to asparagine 210. Serine 266 is a catalytic residue. The active site involves aspartate 458. The N-linked (GlcNAc...) asparagine glycan is linked to asparagine 509. The active site involves histidine 520.

This sequence belongs to the peptidase S10 family.

The protein localises to the vacuole. The catalysed reaction is Release of a C-terminal amino acid with broad specificity.. Vacuolar carboxypeptidase involved in degradation of small peptides. Digests preferentially peptides containing an aliphatic or hydrophobic residue in P1' position, as well as methionine, leucine or phenylalanine in P1 position of ester substrate. The polypeptide is Carboxypeptidase Y homolog A (cpyA) (Aspergillus clavatus (strain ATCC 1007 / CBS 513.65 / DSM 816 / NCTC 3887 / NRRL 1 / QM 1276 / 107)).